The following is a 316-amino-acid chain: PAK4-inhibitor inka1 (316 aa).

Positions 108–130 are disordered; the sequence is YSEVSGSSLRGEEDDIVEEESET. The span at 119–128 shows a compositional bias: acidic residues; it reads EEDDIVEEES. 2 inka box regions span residues 182 to 219 and 289 to 316; these read DSQD…DLPE and SDIA…AGFL.

It belongs to the INKA family. In terms of assembly, interacts with pak4/pak5.

The protein resides in the nucleus. It is found in the cytoplasm. Inhibitor of the serine/threonine-protein kinase pak4/pak5. Acts by binding pak4/pak5 in a substrate-like manner, inhibiting the protein kinase activity. Required for the proper migration of neural crest cells during embryonic development, probably by inhibiting pak4/pak5. The chain is PAK4-inhibitor inka1 from Xenopus laevis (African clawed frog).